The following is a 146-amino-acid chain: Hemoglobin subunit beta (146 aa).

Val1 is modified (N-acetylvaline). The region spanning 2 to 146 (HLSGEEKGAV…VATALAHKYH (145 aa)) is the Globin domain. Thr12 carries the post-translational modification Phosphothreonine. Ser44 is subject to Phosphoserine. Lys59 carries the post-translational modification N6-acetyllysine. His63 is a binding site for heme b. The residue at position 82 (Lys82) is an N6-acetyllysine. His92 contacts heme b. Cys93 carries the post-translational modification S-nitrosocysteine. Lys144 carries the N6-acetyllysine modification.

The protein belongs to the globin family. In terms of assembly, heterotetramer of two alpha chains and two beta chains. In terms of tissue distribution, red blood cells.

In terms of biological role, involved in oxygen transport from the lung to the various peripheral tissues. This Tadarida brasiliensis (Brazilian free-tailed bat) protein is Hemoglobin subunit beta (HBB).